The chain runs to 226 residues: Sugar fermentation stimulation protein homolog (226 aa).

This sequence belongs to the SfsA family.

This is Sugar fermentation stimulation protein homolog from Ruminiclostridium cellulolyticum (strain ATCC 35319 / DSM 5812 / JCM 6584 / H10) (Clostridium cellulolyticum).